The sequence spans 158 residues: Snaclec alboaggregin-D subunit alpha (158 aa).

An N-terminal signal peptide occupies residues 1-23 (MGRFIFGSFGLLVVFLSLSGTGA). Disulfide bonds link C27–C38, C55–C152, and C127–C144. Residues 34–153 (YDRYCYQAFS…CAELNPFICK (120 aa)) form the C-type lectin domain.

This sequence belongs to the snaclec family. As to quaternary structure, tetramer of heterodimers of alpha and beta subunits (alphabeta)(4); disulfide-linked. As to expression, expressed by the venom gland.

Its subcellular location is the secreted. In terms of biological role, snaclec that induces human platelet aggregation in the absence of any cofactor with the EC(50) of 0.25 nM and causes tyrosine phosphorylation in human platelets. Antibodies against either platelet GPIbalpha (GP1BA) or GPVI (GP6) inhibit alboaggregin D-induced platelet aggregation. Only the combination of these two antibodies completely inhibit aggregation, suggesting that it acts through both GPIbalpha (GP1BA) and GPVI (GP6). This is Snaclec alboaggregin-D subunit alpha from Trimeresurus albolabris (White-lipped pit viper).